A 1210-amino-acid polypeptide reads, in one-letter code: MIDRKALLNDLKQQVKAVEADLGKQVKALDEVGARLRAEYDQARKLGRTAATWNSWLDERVTQVAVAWVLGTVFVRFCEDNRLIPEPYVTGPDNYRRDLAETRYDVYVEADDDPTYRGWLRRAFAELGDGQAGRLLFDSDHNPLYQIPLSHDGARELVEFWRQRDEEGALVHDFTDPLSADGTEGWGTRFLGDLYQDLSEAARKTYALLQTPEFVEEFILDRTMNPAVREFGYEELKMIDPTCGSGHFVLGAFRRLVRLGGENQPGKDVHQRVRAALDSVHGVDINPFAVAIARFRLLVAAMAASGVRTLDEASKYEWPVHLAVGDSLIKSGSQQGSLFGESDDDLTDELAEFKYATEDVGEHPEMLRPGRYHVVVGNPPYITVKDKSLNALYRELYPACAGKYALSVPFAQRFFELAKREDAEGSGYGMVGQITANSFMKREFGTKLIEGYFGHAVELTEVIDTSGAYIPGHGTPTVILVGTRRGGDGRSPVIRTVRSVQGEPVAPENAEEGLVWRAIVEQIDKPGSVSQWVSVDDLDREKYFSKQPWVLADGGQEMLEQINAASHAILKRDLHRIGFYGIMGADDAMSAVPRTFRRNNAESEYVRRLVVGDEVRDFRIADGDDAFHPYGSQRDLVGPDAFPNLAAWLWPYRTELGGRATFSGGTYFADGRPWWEWHQLPKDVGAHAWSLNFAFVATHNHVVLDRSGCAFTRTAPVIKLREGASEEEHLRLLGLLNSSTAGFWLKMVSYPKGGDPVGDEGARVSVHPWSDRYEFTGTKLQEFPLPSEYPTGLGTALDALAQRLAAASPAAVAAEAVPIAGLLREARTRWEAIRSRMIALQEEMDWQVYSLYKLHSEDLRVSEDPDDTNIPELTLGGRAFEIVLARRVAAGEASDEWFKRHNSTPITEIPAHWPAPYREIVQKRIDAIESNRAIGMVERPEYKRRWATEGWDALQEKALRSWLLDRMENRDLWCDENGQPTILTLARLTDALSRDEDFASVAKLYAPRKELAKVVAELITDEHVPFLSALRYKPSGLKKRADWEEVWDLQRKEDAAPDEPAKRKIRDSIPVPPKYTSADFLRPSYWKARGKLDVPKERFVSYGQTNAATPELYGWAGWDHREQAQALATYFTNTALSTKEITPFLAGLLELQPWLSQWHNEFDMLYSGSPADFFAGYRQQKQGEHGLTDDDLRGWRPPAATRRRRAAAKQ.

Residues 1181–1194 are compositionally biased toward basic and acidic residues; that stretch reads KQGEHGLTDDDLRG. The interval 1181–1210 is disordered; the sequence is KQGEHGLTDDDLRGWRPPAATRRRRAAAKQ. Basic residues predominate over residues 1201 to 1210; sequence TRRRRAAAKQ.

Belongs to the methyltransferase superfamily. PglX adenine methyltransferase family.

The enzyme catalyses a 2'-deoxyadenosine in DNA + S-adenosyl-L-methionine = an N(6)-methyl-2'-deoxyadenosine in DNA + S-adenosyl-L-homocysteine + H(+). Functionally, BREX systems (bacteriophage exclusion) provide immunity against bacteriophage. Part of a type 2 BREX system. Probably a DNA methyltransferase, it methylates phage DNA in vitro in an S-adenosyl-L-methionine-dependent manner. Previously called the phage growth limitation (Pgl) system, it confers protection against bacteriophage phiC31. The bacteria allows one cycle of phage infection, but subsequent cycles are impaired, protecting the original bacterial colony. The system undergoes high rates (10(-3) to 10(-4)) of phase reversion, i.e. loss and regain of phiC31 resistance. When the pglW-pglX-pglY-pglZ genes are transformed into a susceptible S.lividans (strain 1326) they confer resistance to infection by phage phiC31 and phiBT1; all 4 genes are necessary. Probably a toxic component of a type II toxin-antitoxin (TA) system. The toxic activity is inhibited by its cognate antitoxin PglZ. In terms of biological role, may be a subtypes G and alpha restriction enzyme that recognizes and cleaves an unknown sequence. Methylates an adenine residue in the same sequence. The protein is Adenine-specific methyltransferase PglX of Streptomyces coelicolor (strain ATCC BAA-471 / A3(2) / M145).